We begin with the raw amino-acid sequence, 81 residues long: Cytochrome b559 subunit alpha (81 aa).

Residues 21–35 (VIHSVTIPSLFVGGW) form a helical membrane-spanning segment. H23 provides a ligand contact to heme.

Belongs to the PsbE/PsbF family. As to quaternary structure, heterodimer of an alpha subunit and a beta subunit. PSII is composed of 1 copy each of membrane proteins PsbA, PsbB, PsbC, PsbD, PsbE, PsbF, PsbH, PsbI, PsbJ, PsbK, PsbL, PsbM, PsbT, PsbY, PsbZ, Psb30/Ycf12, at least 3 peripheral proteins of the oxygen-evolving complex and a large number of cofactors. It forms dimeric complexes. Heme b serves as cofactor.

It is found in the plastid. The protein localises to the chloroplast thylakoid membrane. Its function is as follows. This b-type cytochrome is tightly associated with the reaction center of photosystem II (PSII). PSII is a light-driven water:plastoquinone oxidoreductase that uses light energy to abstract electrons from H(2)O, generating O(2) and a proton gradient subsequently used for ATP formation. It consists of a core antenna complex that captures photons, and an electron transfer chain that converts photonic excitation into a charge separation. The protein is Cytochrome b559 subunit alpha of Euglena gracilis.